Here is a 729-residue protein sequence, read N- to C-terminus: Catalase-peroxidase (729 aa).

The tract at residues 1-33 (MSAHNTNESAVGKCPFHEQKEEKSVLARGAGGG) is disordered. Over residues 15-25 (PFHEQKEEKSV) the composition is skewed to basic and acidic residues. Residues 108–229 (WHSAGTYRTV…LGATEMGLIY (122 aa)) constitute a cross-link (tryptophyl-tyrosyl-methioninium (Trp-Tyr) (with M-255)). The Proton acceptor role is filled by His109. A cross-link (tryptophyl-tyrosyl-methioninium (Tyr-Met) (with W-108)) is located at residues 229 to 255 (YVNPEGPEASGNPASAAPAIRATFGNM). Residue His270 participates in heme b binding.

Belongs to the peroxidase family. Peroxidase/catalase subfamily. In terms of assembly, homodimer or homotetramer. It depends on heme b as a cofactor. Formation of the three residue Trp-Tyr-Met cross-link is important for the catalase, but not the peroxidase activity of the enzyme.

It catalyses the reaction H2O2 + AH2 = A + 2 H2O. The catalysed reaction is 2 H2O2 = O2 + 2 H2O. In terms of biological role, bifunctional enzyme with both catalase and broad-spectrum peroxidase activity. This chain is Catalase-peroxidase, found in Erwinia tasmaniensis (strain DSM 17950 / CFBP 7177 / CIP 109463 / NCPPB 4357 / Et1/99).